The primary structure comprises 62 residues: Photosystem II reaction center protein Z (62 aa).

Transmembrane regions (helical) follow at residues 8–28 (AVFALIATSSILLIGVPVVFA) and 41–61 (FSGTSLWIGLVFLVGILNSLI).

This sequence belongs to the PsbZ family. PSII is composed of 1 copy each of membrane proteins PsbA, PsbB, PsbC, PsbD, PsbE, PsbF, PsbH, PsbI, PsbJ, PsbK, PsbL, PsbM, PsbT, PsbY, PsbZ, Psb30/Ycf12, at least 3 peripheral proteins of the oxygen-evolving complex and a large number of cofactors. It forms dimeric complexes.

The protein resides in the plastid. The protein localises to the chloroplast thylakoid membrane. Functionally, may control the interaction of photosystem II (PSII) cores with the light-harvesting antenna, regulates electron flow through the 2 photosystem reaction centers. PSII is a light-driven water plastoquinone oxidoreductase, using light energy to abstract electrons from H(2)O, generating a proton gradient subsequently used for ATP formation. In Panax ginseng (Korean ginseng), this protein is Photosystem II reaction center protein Z.